Reading from the N-terminus, the 265-residue chain is Undecaprenyl-diphosphatase (265 aa).

8 helical membrane passes run 1–21 (MDIL…FLPI), 39–59 (QGLA…ILYF), 86–106 (WCII…GNFI), 112–132 (SVSV…FADA), 140–160 (LAQM…LAMI), 186–206 (FSFL…GLKL), 219–239 (VGVL…LSFI), and 244–264 (MLPF…LVWF).

It belongs to the UppP family.

Its subcellular location is the cell inner membrane. The enzyme catalyses di-trans,octa-cis-undecaprenyl diphosphate + H2O = di-trans,octa-cis-undecaprenyl phosphate + phosphate + H(+). In terms of biological role, catalyzes the dephosphorylation of undecaprenyl diphosphate (UPP). Confers resistance to bacitracin. The sequence is that of Undecaprenyl-diphosphatase from Saccharophagus degradans (strain 2-40 / ATCC 43961 / DSM 17024).